Reading from the N-terminus, the 358-residue chain is Gentisate 1,2-dioxygenase (358 aa).

The Cupin type-1 domain occupies 239-358 (QTLRQRAEND…AFNFYAEAEP (120 aa)).

The protein belongs to the gentisate 1,2-dioxygenase family. Homotetramer.

It carries out the reaction 2,5-dihydroxybenzoate + O2 = 3-maleylpyruvate + H(+). It participates in aromatic compound metabolism; naphthalene degradation. Its activity is regulated as follows. Inhibited by 2,2'-dipyridyl. Catalyzes the oxygen-dependent ring fission of gentisate between the carboxyl and proximal hydroxyl groups at positions 1 and 2 of the aromatic ring to form maleylpyruvate. No activity with cathechol and protecatechuate as substrates. Part of a 3-hydroxybenzoic acid-degradation pathway. This is Gentisate 1,2-dioxygenase (gdoA) from Haloferax sp.